The primary structure comprises 200 residues: Small ribosomal subunit protein uS4 (200 aa).

The interval 22–43 (TGKELERRPYAPGQHGPTQRKK) is disordered. Positions 92–170 (QRLDNIVYRL…VPEYVTFDAE (79 aa)) constitute an S4 RNA-binding domain.

This sequence belongs to the universal ribosomal protein uS4 family. Part of the 30S ribosomal subunit. Contacts protein S5. The interaction surface between S4 and S5 is involved in control of translational fidelity.

Functionally, one of the primary rRNA binding proteins, it binds directly to 16S rRNA where it nucleates assembly of the body of the 30S subunit. Its function is as follows. With S5 and S12 plays an important role in translational accuracy. In Listeria innocua serovar 6a (strain ATCC BAA-680 / CLIP 11262), this protein is Small ribosomal subunit protein uS4.